A 419-amino-acid chain; its full sequence is 3-phosphoshikimate 1-carboxyvinyltransferase (419 aa).

3-phosphoshikimate is bound by residues K21, S22, and R26. Residue K21 participates in phosphoenolpyruvate binding. Residues G91 and R119 each contribute to the phosphoenolpyruvate site. Positions 164, 165, 166, 191, 305, and 332 each coordinate 3-phosphoshikimate. Q166 serves as a coordination point for phosphoenolpyruvate. Catalysis depends on D305, which acts as the Proton acceptor. Positions 336 and 376 each coordinate phosphoenolpyruvate.

The protein belongs to the EPSP synthase family. As to quaternary structure, monomer.

It localises to the cytoplasm. It catalyses the reaction 3-phosphoshikimate + phosphoenolpyruvate = 5-O-(1-carboxyvinyl)-3-phosphoshikimate + phosphate. Its pathway is metabolic intermediate biosynthesis; chorismate biosynthesis. Functionally, catalyzes the transfer of the enolpyruvyl moiety of phosphoenolpyruvate (PEP) to the 5-hydroxyl of shikimate-3-phosphate (S3P) to produce enolpyruvyl shikimate-3-phosphate and inorganic phosphate. This is 3-phosphoshikimate 1-carboxyvinyltransferase from Methanothermobacter thermautotrophicus (strain ATCC 29096 / DSM 1053 / JCM 10044 / NBRC 100330 / Delta H) (Methanobacterium thermoautotrophicum).